The chain runs to 703 residues: MARKTPIARYRNIGICAHVDAGKTTTTERVLFYTGLSHKIGEVHDGAATMDWMEQEQERGITITSAATTCFWAGMEQQFDQHRINIIDTPGHVDFTIEVERSLRVLDGAVVVLCGSSGVQPQTETVWRQANKYEVPRMVFVNKMDRAGANFLRVVEQLKDRLGATAVPLQMTIGSEDEFKGIVDLIEMKAILWNEADQGMTFDRADIPADMLEECEELREQMVEAAAEANEELMEKYLEEGELTNDEIKKGIRLRTLANEIVPVLGGSAFKNKGVQAMLDAVIEYLPAPTEVKAIQGTLEDGETVAERHADDTEPFSALAFKIATDPFVGTLTFFRVYSGKLESGTALLNSVKGKKERIGRMVQMHANSREEIKEVLAGDIAAAIGLKDTTTGDTLCAENSFIVLERMEFPEPVISVAVEPKSKADQEKMGIALGKLAQEDPSFRVRTDEETGQTIISGMGELHLDILVDRMRREFKVEANIGKPQVAYRERITKTSEIEGKFVRQSGGRGQFGHVWIRFEPAEDGDAEGLEFVNEIVGGVVPKEYIPAVEKGISEQMQNGVVAGYPLLGLKATIYDGSYHDVDSNEMAFKIAASMATKKLAQHGGAVLLEPMMKVEVVTPEENMGDVVGDLNRRRGLIQGMDENPSGKVVNAEVPLAEMFGYATALRSATQGRATFTMEFERYAEAPSNIAEEIIAKNKTGE.

The tr-type G domain occupies 8 to 290; that stretch reads ARYRNIGICA…AVIEYLPAPT (283 aa). GTP contacts are provided by residues 17–24, 88–92, and 142–145; these read AHVDAGKT, DTPGH, and NKMD.

Belongs to the TRAFAC class translation factor GTPase superfamily. Classic translation factor GTPase family. EF-G/EF-2 subfamily.

It localises to the cytoplasm. Functionally, catalyzes the GTP-dependent ribosomal translocation step during translation elongation. During this step, the ribosome changes from the pre-translocational (PRE) to the post-translocational (POST) state as the newly formed A-site-bound peptidyl-tRNA and P-site-bound deacylated tRNA move to the P and E sites, respectively. Catalyzes the coordinated movement of the two tRNA molecules, the mRNA and conformational changes in the ribosome. The polypeptide is Elongation factor G (Teredinibacter turnerae (strain ATCC 39867 / T7901)).